The primary structure comprises 81 residues: Photosystem I iron-sulfur center (81 aa).

4Fe-4S ferredoxin-type domains follow at residues 1 to 31 (MSHK…MVPW) and 39 to 68 (IASS…IRVY). [4Fe-4S] cluster contacts are provided by Cys-11, Cys-14, Cys-17, Cys-21, Cys-48, Cys-51, Cys-54, and Cys-58.

The cyanobacterial PSI reaction center is composed of one copy each of PsaA,B,C,D,E,F,I,J,K,L,M and X, and forms trimeric complexes. [4Fe-4S] cluster serves as cofactor.

It is found in the cellular thylakoid membrane. It catalyses the reaction reduced [plastocyanin] + hnu + oxidized [2Fe-2S]-[ferredoxin] = oxidized [plastocyanin] + reduced [2Fe-2S]-[ferredoxin]. Functionally, apoprotein for the two 4Fe-4S centers FA and FB of photosystem I (PSI); essential for photochemical activity. FB is the terminal electron acceptor of PSI, donating electrons to ferredoxin. The C-terminus interacts with PsaA/B/D and helps assemble the protein into the PSI complex. Required for binding of PsaD and PsaE to PSI. PSI is a plastocyanin/cytochrome c6-ferredoxin oxidoreductase, converting photonic excitation into a charge separation, which transfers an electron from the donor P700 chlorophyll pair to the spectroscopically characterized acceptors A0, A1, FX, FA and FB in turn. The protein is Photosystem I iron-sulfur center of Crocosphaera subtropica (strain ATCC 51142 / BH68) (Cyanothece sp. (strain ATCC 51142)).